The primary structure comprises 441 residues: Chromosomal replication initiator protein DnaA (441 aa).

A domain I, interacts with DnaA modulators region spans residues Met1 to Phe71. The tract at residues Phe71 to Ser99 is domain II. Residues Asp100–Lys318 are domain III, AAA+ region. Residues Gly143, Gly145, Lys146, and Thr147 each coordinate ATP. The tract at residues Lys319–Gln441 is domain IV, binds dsDNA.

Belongs to the DnaA family. In terms of assembly, oligomerizes as a right-handed, spiral filament on DNA at oriC.

Its subcellular location is the cytoplasm. In terms of biological role, plays an essential role in the initiation and regulation of chromosomal replication. ATP-DnaA binds to the origin of replication (oriC) to initiate formation of the DNA replication initiation complex once per cell cycle. Binds the DnaA box (a 9 base pair repeat at the origin) and separates the double-stranded (ds)DNA. Forms a right-handed helical filament on oriC DNA; dsDNA binds to the exterior of the filament while single-stranded (ss)DNA is stabiized in the filament's interior. The ATP-DnaA-oriC complex binds and stabilizes one strand of the AT-rich DNA unwinding element (DUE), permitting loading of DNA polymerase. After initiation quickly degrades to an ADP-DnaA complex that is not apt for DNA replication. Binds acidic phospholipids. This is Chromosomal replication initiator protein DnaA from Leptospira biflexa serovar Patoc (strain Patoc 1 / Ames).